Consider the following 175-residue polypeptide: Ribosome maturation factor RimP (175 aa).

The disordered stretch occupies residues 152–175; the sequence is EFNRPTDGPGDDGDDGGDDEAGEA. Over residues 160-175 the composition is skewed to acidic residues; the sequence is PGDDGDDGGDDEAGEA.

It belongs to the RimP family.

The protein resides in the cytoplasm. Required for maturation of 30S ribosomal subunits. The protein is Ribosome maturation factor RimP of Nocardioides sp. (strain ATCC BAA-499 / JS614).